The following is a 943-amino-acid chain: Valine--tRNA ligase (943 aa).

The 'HIGH' region signature appears at Pro45–His55. A 'KMSKS' region motif is present at residues Lys541 to Ser545. Residue Lys544 participates in ATP binding. A coiled-coil region spans residues Ile875 to Lys934.

Belongs to the class-I aminoacyl-tRNA synthetase family. ValS type 1 subfamily. As to quaternary structure, monomer.

The protein resides in the cytoplasm. The catalysed reaction is tRNA(Val) + L-valine + ATP = L-valyl-tRNA(Val) + AMP + diphosphate. Catalyzes the attachment of valine to tRNA(Val). As ValRS can inadvertently accommodate and process structurally similar amino acids such as threonine, to avoid such errors, it has a 'posttransfer' editing activity that hydrolyzes mischarged Thr-tRNA(Val) in a tRNA-dependent manner. This Dechloromonas aromatica (strain RCB) protein is Valine--tRNA ligase.